Consider the following 52-residue polypeptide: Lysis protein for colicin N (52 aa).

An N-terminal signal peptide occupies residues 1 to 17; sequence MCGKILLILFFIMTLSA. Cys-18 is lipidated: N-palmitoyl cysteine. Cys-18 is lipidated: S-diacylglycerol cysteine.

It is found in the cell outer membrane. In terms of biological role, lysis proteins are required for both colicin release and partial cell lysis. The sequence is that of Lysis protein for colicin N (cnl) from Escherichia coli.